Reading from the N-terminus, the 677-residue chain is Collagen alpha-2(IX) chain (677 aa).

The N-terminal stretch at 1–21 (MAHRSPALCLLLLHAACLCLA) is a signal peptide. A triple-helical region 4 (COL4) region spans residues 25–161 (GPPGEPGPRG…PGKPGPPGHI (137 aa)). Pro residues predominate over residues 28–41 (GEPGPRGPPGPPGV). The tract at residues 28–516 (GEPGPRGPPG…MPGQRGVAGR (489 aa)) is disordered. Positions 53 to 66 (SPGAPGSPGAKGEP) are enriched in low complexity. The span at 68 to 77 (APGPDGPPGK) shows a compositional bias: pro residues. The segment covering 91 to 100 (GPWGGQGLKG) has biased composition (gly residues). Pro residues-rich tracts occupy residues 104 to 121 (LPGP…PPGL) and 137 to 158 (KGDP…PGPP). At proline 158 the chain carries 4-hydroxyproline. The tract at residues 162-178 (QGVEGSADFLCPTNCPP) is nonhelical region 4 (NC4). Residue serine 167 is glycosylated (O-linked (Xyl...) (glycosaminoglycan) serine). At proline 178 the chain carries 4-hydroxyproline. A triple-helical region 3 (COL3) region spans residues 179 to 517 (GPKGPQGLQG…PGQRGVAGRD (339 aa)). Lysine 181 is subject to 5-hydroxylysine. O-linked (Gal...) hydroxylysine glycosylation occurs at lysine 181. An Allysine modification is found at lysine 190. Low complexity-rich tracts occupy residues 363 to 382 (TPGL…AGVP), 430 to 442 (PGKT…TGDP), and 496 to 505 (RGLLGERGVP). The nonhelical region 3 (NC3) stretch occupies residues 518–547 (AGDQHIIDVVLKMMQEQLAEVAVSAKRAAL). The segment at 548-630 (GGVGAMGPPG…PGLPGIPGHA (83 aa)) is triple-helical region 2 (COL2). The tract at residues 550-657 (VGAMGPPGPP…GRPGSPGPAG (108 aa)) is disordered. Positions 555–565 (PPGPPGPPGPP) are enriched in pro residues. Positions 597–609 (KRGEKGERGDTGR) are enriched in basic and acidic residues. A nonhelical region 2 (NC2) region spans residues 631–632 (LA). The interval 633–662 (GKDGERGPPGVPGDAGRPGSPGPAGLPGFC) is triple-helical region 1 (COL1). The tract at residues 663 to 677 (EPAACLGALPTPRHG) is nonhelical region 1 (NC1).

It belongs to the fibril-associated collagens with interrupted helices (FACIT) family. Heterotrimer of an alpha 1(IX), an alpha 2(IX) and an alpha 3(IX) chain. The chains are linked to each other by interchain disulfide bonds. Trimers are also cross-linked via hydroxylysines. Covalently linked to the telopeptides of type II collagen by lysine-derived cross-links. In terms of processing, prolines at the third position of the tripeptide repeating unit (G-X-Y) are hydroxylated in some or all of the chains.

The protein localises to the secreted. It localises to the extracellular space. Its subcellular location is the extracellular matrix. Structural component of hyaline cartilage and vitreous of the eye. The sequence is that of Collagen alpha-2(IX) chain (COL9A2) from Gallus gallus (Chicken).